The sequence spans 294 residues: RAB7A-interacting MON1-CCZ1 complex subunit 1 (294 aa).

At Ala2 the chain carries N-acetylalanine.

It belongs to the RIMOC1 family. As to quaternary structure, interacts with the MON1A-CCZ1B complex. Interacts with GDP-bound RAB7A and promotes its interaction with the MON1A-CCZ1B complex.

It is found in the cytoplasm. It localises to the cytosol. Functionally, plays an important role in the removal of damaged mitochondria via mitophagy by controlling the stability and localization of RAB7A. Required for the recruitment of RAB7A and ATG9A vesicles to damaged mitochondria and promotes the stability of RAB7A by inhibiting its proteasomal degradation during mitophagy. The sequence is that of RAB7A-interacting MON1-CCZ1 complex subunit 1 from Homo sapiens (Human).